A 177-amino-acid polypeptide reads, in one-letter code: B-phycoerythrin beta chain (177 aa).

Residues Cys50 and Cys61 each contribute to the phycourobilin site. Asn72 is subject to N4-methylasparagine. (2R,3E)-phycoerythrobilin-binding residues include Cys82 and Cys158.

It belongs to the phycobiliprotein family. Heteromer of 6 alpha, 6 beta and one gamma chain. Contains two covalently linked phycoerythrobilin chromophores and one covalently linked phycourobilin chromophore.

The protein resides in the plastid. It localises to the chloroplast thylakoid membrane. Functionally, light-harvesting photosynthetic bile pigment-protein from the phycobiliprotein complex. In Rhodella violacea (Red alga), this protein is B-phycoerythrin beta chain (cpeB).